A 551-amino-acid polypeptide reads, in one-letter code: Chaperonin GroEL (551 aa).

ATP contacts are provided by residues 29 to 32 (TAGP), K50, 86 to 90 (DGTTT), G417, and D499.

This sequence belongs to the chaperonin (HSP60) family. Forms a cylinder of 14 subunits composed of two heptameric rings stacked back-to-back. Interacts with the co-chaperonin GroES.

It is found in the cytoplasm. The catalysed reaction is ATP + H2O + a folded polypeptide = ADP + phosphate + an unfolded polypeptide.. Functionally, together with its co-chaperonin GroES, plays an essential role in assisting protein folding. The GroEL-GroES system forms a nano-cage that allows encapsulation of the non-native substrate proteins and provides a physical environment optimized to promote and accelerate protein folding. The sequence is that of Chaperonin GroEL from Ehrlichia ruminantium (strain Gardel).